The primary structure comprises 241 residues: Keratin-associated protein 5-5 (241 aa).

Tandem repeats lie at residues 35-38, 41-44, 47-50, 105-108, 115-118, 133-136, 143-146, 161-164, 171-174, 181-184, 191-194, 201-204, 211-214, 221-224, and 231-234. The tract at residues 35–234 is 15 X 4 AA repeats of C-C-X-P; the sequence is CCKPVCCCKP…CCCQSSCCAP (200 aa).

The protein belongs to the KRTAP type 5 family. As to quaternary structure, interacts with hair keratins.

Its function is as follows. In the hair cortex, hair keratin intermediate filaments are embedded in an interfilamentous matrix, consisting of hair keratin-associated protein (KRTAP), which are essential for the formation of a rigid and resistant hair shaft through their extensive disulfide bond cross-linking with abundant cysteine residues of hair keratins. The matrix proteins include the high-sulfur and high-glycine-tyrosine keratins. The polypeptide is Keratin-associated protein 5-5 (Mus musculus (Mouse)).